A 424-amino-acid polypeptide reads, in one-letter code: Serine/threonine-protein kinase H1 (424 aa).

A lipid anchor (N-myristoyl glycine) is attached at Gly2. The S-palmitoyl cysteine moiety is linked to residue Cys3. A disordered region spans residues 49–81 (KGGFPAASQGANPSPGTPRTSHTEPPSEPPRRA). Residues 57-72 (QGANPSPGTPRTSHTE) show a composition bias toward polar residues. One can recognise a Protein kinase domain in the interval 98 to 355 (YDIKALIGRG…ALQALRHPWV (258 aa)). Residues 104–112 (IGRGSFSRV) and Lys127 each bind ATP. The active-site Proton acceptor is Asp218. The interval 378 to 407 (RASSRCQSTKSAQSTRSSRSTRSNKSRRVR) is disordered. Phosphoserine; by autocatalysis is present on residues Ser380 and Ser381. A compositionally biased stretch (low complexity) spans 385-398 (STKSAQSTRSSRST).

The protein belongs to the protein kinase superfamily. CAMK Ser/Thr protein kinase family. As to quaternary structure, homodimer. In terms of processing, autophosphorylated on serine residues. Myristoylated. Required for membrane association. Prerequisite for palmitoylation to occur. Post-translationally, palmitoylated.

The protein resides in the golgi apparatus. It localises to the cytoplasm. The protein localises to the cytoskeleton. Its subcellular location is the microtubule organizing center. It is found in the centrosome. The protein resides in the nucleus speckle. It localises to the endoplasmic reticulum membrane. The protein localises to the cell membrane. It catalyses the reaction L-seryl-[protein] + ATP = O-phospho-L-seryl-[protein] + ADP + H(+). The enzyme catalyses L-threonyl-[protein] + ATP = O-phospho-L-threonyl-[protein] + ADP + H(+). Activity depends on Ca(2+) concentration. May be a SFC-associated serine kinase (splicing factor compartment-associated serine kinase) with a role in intranuclear SR protein (non-snRNP splicing factors containing a serine/arginine-rich domain) trafficking and pre-mRNA processing. The sequence is that of Serine/threonine-protein kinase H1 (PSKH1) from Bos taurus (Bovine).